The following is a 386-amino-acid chain: MNSVPSLPGQSVAAVVVAGGKGLRTGGPVPKQFVIWRGKPLLRHCVEALEAAGIAPIVVAIPAGWDEAATQALAGISMVRLVHGGATRQESVKAALEVLEGDAPARVLIHDAARPDLPGSVIERLLTALDKRTGAIPVLPVVDSMVRGSGDAMGETVAREDLYRVQTPQAFHYPAILAAHRAWQGEALAGDDAQVAMRAAHEIALVEGDEALRKVTFASDLEEQSMSVIPRTGMGFDVHRLVEGEELWLCGVNIPHGKGLSGHSDADVAIHALVDALLGAIAAGDIGDHFPPSDPQWKGASSDRFLAHAGTLVTEAGYRIANVDVTIICEAPKIGPHKAAMRETLARILGIDSALVSVKATTTERLGLTGRGEGIAAQAVATVVSG.

Positions 1–230 are 2-C-methyl-D-erythritol 4-phosphate cytidylyltransferase; sequence MNSVPSLPGQ…LEEQSMSVIP (230 aa). The segment at 231–386 is 2-C-methyl-D-erythritol 2,4-cyclodiphosphate synthase; sequence RTGMGFDVHR…AQAVATVVSG (156 aa). D237 and H239 together coordinate a divalent metal cation. Residues 237–239 and 263–264 contribute to the 4-CDP-2-C-methyl-D-erythritol 2-phosphate site; these read DVH and HS. H271 serves as a coordination point for a divalent metal cation. Residues 285–287, 361–364, and R371 contribute to the 4-CDP-2-C-methyl-D-erythritol 2-phosphate site; these read DIG and TTTE.

In the N-terminal section; belongs to the IspD/TarI cytidylyltransferase family. IspD subfamily. This sequence in the C-terminal section; belongs to the IspF family. It depends on a divalent metal cation as a cofactor.

The catalysed reaction is 2-C-methyl-D-erythritol 4-phosphate + CTP + H(+) = 4-CDP-2-C-methyl-D-erythritol + diphosphate. The enzyme catalyses 4-CDP-2-C-methyl-D-erythritol 2-phosphate = 2-C-methyl-D-erythritol 2,4-cyclic diphosphate + CMP. It participates in isoprenoid biosynthesis; isopentenyl diphosphate biosynthesis via DXP pathway; isopentenyl diphosphate from 1-deoxy-D-xylulose 5-phosphate: step 2/6. The protein operates within isoprenoid biosynthesis; isopentenyl diphosphate biosynthesis via DXP pathway; isopentenyl diphosphate from 1-deoxy-D-xylulose 5-phosphate: step 4/6. In terms of biological role, bifunctional enzyme that catalyzes the formation of 4-diphosphocytidyl-2-C-methyl-D-erythritol from CTP and 2-C-methyl-D-erythritol 4-phosphate (MEP) (IspD), and catalyzes the conversion of 4-diphosphocytidyl-2-C-methyl-D-erythritol 2-phosphate (CDP-ME2P) to 2-C-methyl-D-erythritol 2,4-cyclodiphosphate (ME-CPP) with a corresponding release of cytidine 5-monophosphate (CMP) (IspF). The chain is Bifunctional enzyme IspD/IspF from Novosphingobium aromaticivorans (strain ATCC 700278 / DSM 12444 / CCUG 56034 / CIP 105152 / NBRC 16084 / F199).